The primary structure comprises 333 residues: 5-formaminoimidazole-4-carboxamide-1-(beta)-D-ribofuranosyl 5'-monophosphate synthetase (333 aa).

Residues histidine 21 and serine 84 each contribute to the 5-amino-1-(5-phospho-beta-D-ribosyl)imidazole-4-carboxamide site. The region spanning 118–313 is the ATP-grasp domain; it reads MELLAAAGIP…YFDEPMDMGE (196 aa). Residues 141–187 and glutamate 209 contribute to the ATP site; that span reads PVIV…VPAY. Asparagine 229 contributes to the 5-amino-1-(5-phospho-beta-D-ribosyl)imidazole-4-carboxamide binding site. Mg(2+) is bound by residues glutamate 268 and glutamate 281.

The protein belongs to the phosphohexose mutase family. The cofactor is Mg(2+). Mn(2+) serves as cofactor.

It catalyses the reaction 5-amino-1-(5-phospho-beta-D-ribosyl)imidazole-4-carboxamide + formate + ATP = 5-formamido-1-(5-phospho-D-ribosyl)imidazole-4-carboxamide + ADP + phosphate. Its pathway is purine metabolism; IMP biosynthesis via de novo pathway; 5-formamido-1-(5-phospho-D-ribosyl)imidazole-4-carboxamide from 5-amino-1-(5-phospho-D-ribosyl)imidazole-4-carboxamide (formate route): step 1/1. In terms of biological role, catalyzes the ATP- and formate-dependent formylation of 5-aminoimidazole-4-carboxamide-1-beta-d-ribofuranosyl 5'-monophosphate (AICAR) to 5-formaminoimidazole-4-carboxamide-1-beta-d-ribofuranosyl 5'-monophosphate (FAICAR) in the absence of folates. This Pyrobaculum calidifontis (strain DSM 21063 / JCM 11548 / VA1) protein is 5-formaminoimidazole-4-carboxamide-1-(beta)-D-ribofuranosyl 5'-monophosphate synthetase.